Here is a 255-residue protein sequence, read N- to C-terminus: Imidazole glycerol phosphate synthase subunit HisF (255 aa).

Residues D12 and D131 contribute to the active site.

This sequence belongs to the HisA/HisF family. In terms of assembly, heterodimer of HisH and HisF.

It is found in the cytoplasm. It carries out the reaction 5-[(5-phospho-1-deoxy-D-ribulos-1-ylimino)methylamino]-1-(5-phospho-beta-D-ribosyl)imidazole-4-carboxamide + L-glutamine = D-erythro-1-(imidazol-4-yl)glycerol 3-phosphate + 5-amino-1-(5-phospho-beta-D-ribosyl)imidazole-4-carboxamide + L-glutamate + H(+). It participates in amino-acid biosynthesis; L-histidine biosynthesis; L-histidine from 5-phospho-alpha-D-ribose 1-diphosphate: step 5/9. Functionally, IGPS catalyzes the conversion of PRFAR and glutamine to IGP, AICAR and glutamate. The HisF subunit catalyzes the cyclization activity that produces IGP and AICAR from PRFAR using the ammonia provided by the HisH subunit. The protein is Imidazole glycerol phosphate synthase subunit HisF of Ruthia magnifica subsp. Calyptogena magnifica.